The chain runs to 70 residues: DNA-directed RNA polymerase subunit epsilon (70 aa).

This sequence belongs to the RNA polymerase subunit epsilon family. In terms of assembly, RNAP is composed of a core of 2 alpha, a beta and a beta' subunit. The core is associated with a delta subunit, and at least one of epsilon or omega. When a sigma factor is associated with the core the holoenzyme is formed, which can initiate transcription.

It carries out the reaction RNA(n) + a ribonucleoside 5'-triphosphate = RNA(n+1) + diphosphate. A non-essential component of RNA polymerase (RNAP). The chain is DNA-directed RNA polymerase subunit epsilon from Bacillus cytotoxicus (strain DSM 22905 / CIP 110041 / 391-98 / NVH 391-98).